A 131-amino-acid polypeptide reads, in one-letter code: Glycine cleavage system H protein (131 aa).

The 83-residue stretch at 24-106 folds into the Lipoyl-binding domain; it reads IATLGISAFA…HGEGWLLKVR (83 aa). K65 bears the N6-lipoyllysine mark.

It belongs to the GcvH family. The glycine cleavage system is composed of four proteins: P, T, L and H. Requires (R)-lipoate as cofactor.

The glycine cleavage system catalyzes the degradation of glycine. The H protein shuttles the methylamine group of glycine from the P protein to the T protein. This Microcystis aeruginosa (strain NIES-843 / IAM M-2473) protein is Glycine cleavage system H protein.